The following is a 947-amino-acid chain: ATPase 10, plasma membrane-type (947 aa).

Residues 1 to 69 (MAEDLDKPLL…EKQENRFVKF (69 aa)) are Cytoplasmic-facing. A helical membrane pass occupies residues 70 to 89 (LGFMWNPLSWVMEAAALMAI). Residues 90 to 101 (ALANSQSLGPDW) are Extracellular-facing. The chain crosses the membrane as a helical span at residues 102 to 122 (EDFTGIVCLLLINATISFFEE). The Cytoplasmic portion of the chain corresponds to 123 to 251 (NNAGNAAAAL…GHFQQVLTSI (129 aa)). Residues 252-272 (GNFCICSIAVGMVLEIIIMFP) traverse the membrane as a helical segment. Residues 273–281 (VQHRSYRIG) lie on the Extracellular side of the membrane. A helical membrane pass occupies residues 282–299 (INNLLVLLIGGIPIAMPT). Over 300-650 (VLSVTLAIGS…TSRAIFQRMR (351 aa)) the chain is Cytoplasmic. Catalysis depends on D337, which acts as the 4-aspartylphosphate intermediate. Residues D595 and D599 each coordinate Mg(2+). A helical transmembrane segment spans residues 651–672 (NYTVYAVSITIRIVLGFTLLAL). Residues 673–677 (IWEYD) lie on the Extracellular side of the membrane. The helical transmembrane segment at 678–700 (FPPFMVLIIAILNDGTIMTISKD) threads the bilayer. Topologically, residues 701–716 (RVRPSPTPESWKLNQI) are cytoplasmic. The helical transmembrane segment at 717–737 (FATGIVIGTYLALVTVLFYWI) threads the bilayer. Residues 738-758 (IVSTTFFEKHFHVKSIANNSE) lie on the Extracellular side of the membrane. A helical membrane pass occupies residues 759–779 (QVSSAMYLQVSIISQALIFVT). The Cytoplasmic segment spans residues 780-791 (RSRGWSFFERPG). Residues 792-812 (TLLIFAFILAQLAATLIAVYA) traverse the membrane as a helical segment. At 813–820 (NISFAKIT) the chain is on the extracellular side. The chain crosses the membrane as a helical span at residues 821-841 (GIGWRWAGVIWLYSLIFYIPL). At 842–947 (DVIKFVFHYA…QRMIRAAHTV (106 aa)) the chain is on the cytoplasmic side. Phosphoserine is present on residues S897 and S929. Residue T946 is modified to Phosphothreonine.

This sequence belongs to the cation transport ATPase (P-type) (TC 3.A.3) family. Type IIIA subfamily. Found primarily in developing seeds. Expressed in guard cells, mesophyll cells, leaves and roots.

It is found in the membrane. It catalyses the reaction ATP + H2O + H(+)(in) = ADP + phosphate + 2 H(+)(out). Its function is as follows. The plasma membrane H(+) ATPase of plants and fungi generates a proton gradient that drives the active transport of nutrients by H(+)-symport. The resulting external acidification and/or internal alkinization may mediate growth responses. The sequence is that of ATPase 10, plasma membrane-type (AHA10) from Arabidopsis thaliana (Mouse-ear cress).